The sequence spans 504 residues: Probable periplasmic serine endoprotease DegP-like (504 aa).

A signal peptide spans 1 to 26 (MLKTTTVAGLAAVLLTTGLPAEVAQS). Over residues 102 to 118 (RADRWRDRRGPRGEGRL) the composition is skewed to basic and acidic residues. The tract at residues 102–122 (RADRWRDRRGPRGEGRLRPRA) is disordered. The segment at 113-286 (RGEGRLRPRA…PASVAKDVVD (174 aa)) is serine protease. Residues His140, Asp170, and Ser244 each act as charge relay system in the active site. Substrate-binding positions include 242–244 (GNS) and 299–303 (LGVQI). PDZ domains lie at 287-378 (SLIK…LWRS) and 401-491 (ATGE…IEAQ). Disordered regions lie at residues 389–411 (GTLP…DEGQ) and 428–447 (EDGK…AGDR).

Belongs to the peptidase S1C family.

It is found in the periplasm. The enzyme catalyses Acts on substrates that are at least partially unfolded. The cleavage site P1 residue is normally between a pair of hydrophobic residues, such as Val-|-Val.. Might be efficient in the degradation of transiently denatured and unfolded proteins which accumulate in the periplasm following stress conditions. The protein is Probable periplasmic serine endoprotease DegP-like (degP1) of Rhizobium meliloti (strain 1021) (Ensifer meliloti).